A 1352-amino-acid chain; its full sequence is Ubiquitin carboxyl-terminal hydrolase 31 (1352 aa).

Over residues 1 to 16 (MSKVTAPGSGPPAAAS) the composition is skewed to low complexity. Disordered regions lie at residues 1–62 (MSKV…RSVG) and 79–119 (SSEG…PPAC). The span at 32–43 (RAGGGGAGGPGA) shows a compositional bias: gly residues. The segment covering 44–62 (SGPAAPSSPSSPSSARSVG) has biased composition (low complexity). Residues 95-117 (PPGPAAAPTPPPCPPPPASPAPP) are compositionally biased toward pro residues. One can recognise a USP domain in the interval 128–765 (AGLRNHGNTC…TAYILFYQRR (638 aa)). C137 serves as the catalytic Nucleophile. The interval 162–185 (RAGRPEPSPDPEQPAGRGAQGQGE) is disordered. The active-site Proton acceptor is H723. 3 disordered regions span residues 812–835 (LASL…FSTR), 919–939 (SSSY…AVGR), and 951–1352 (DESD…QKPQ). The segment covering 958–970 (LNSSVVDTQSKHS) has biased composition (polar residues). Low complexity-rich tracts occupy residues 992–1001 (VDQSDSVDSS), 1051–1070 (SSLS…SLKP), 1078–1089 (DSSSRGSGRHSS), and 1101–1138 (PKSQ…GPAT). A compositionally biased stretch (basic and acidic residues) spans 1148 to 1159 (RTSDHSLSREGS). Residues 1160 to 1181 (RQSLGSDRASATSTSKPNSPRV) show a composition bias toward polar residues. The span at 1198 to 1210 (SSSMASLRSPSTS) shows a compositional bias: low complexity. 2 stretches are compositionally biased toward basic and acidic residues: residues 1215–1225 (LKRDSKSEDKG) and 1234–1243 (RQKETRRSTD). Positions 1251–1264 (SKKAGGSSVKSVCK) are enriched in low complexity. K1264 carries the N6-acetyllysine modification. Polar residues-rich tracts occupy residues 1278 to 1290 (PASQ…TTGK) and 1341 to 1352 (MQTSARPSQKPQ).

This sequence belongs to the peptidase C19 family. In terms of processing, acetylated at Lys-1264. Acetylation decreases activity. Deacetylated by SIRT1. As to expression, widely expressed.

The enzyme catalyses Thiol-dependent hydrolysis of ester, thioester, amide, peptide and isopeptide bonds formed by the C-terminal Gly of ubiquitin (a 76-residue protein attached to proteins as an intracellular targeting signal).. Functionally, deubiquitinase that recognizes and hydrolyzes the peptide bond at the C-terminal Gly of ubiquitin. May play a role in the regulation of NF-kappa-B signaling pathway by deubiquitinating TRAF2. (Microbial infection) Plays a positive role in foot-and-mouth disease and classical swine fever viral infection. Mechanistically, associates with internal ribosomal entry site (IRES) element within the 5'-untranslated region of viral genomes to promote translation of the virus-encoded polyprotein. In Homo sapiens (Human), this protein is Ubiquitin carboxyl-terminal hydrolase 31 (USP31).